Consider the following 282-residue polypeptide: Biotin synthase (282 aa).

The 228-residue stretch at Met-1–Arg-228 folds into the Radical SAM core domain. [4Fe-4S] cluster contacts are provided by Cys-17, Cys-21, and Cys-24. [2Fe-2S] cluster is bound by residues Cys-61, Cys-96, Cys-154, and Arg-221.

Belongs to the radical SAM superfamily. Biotin synthase family. Homodimer. [4Fe-4S] cluster is required as a cofactor. The cofactor is [2Fe-2S] cluster.

It carries out the reaction (4R,5S)-dethiobiotin + (sulfur carrier)-SH + 2 reduced [2Fe-2S]-[ferredoxin] + 2 S-adenosyl-L-methionine = (sulfur carrier)-H + biotin + 2 5'-deoxyadenosine + 2 L-methionine + 2 oxidized [2Fe-2S]-[ferredoxin]. Its pathway is cofactor biosynthesis; biotin biosynthesis; biotin from 7,8-diaminononanoate: step 2/2. Its function is as follows. Catalyzes the conversion of dethiobiotin (DTB) to biotin by the insertion of a sulfur atom into dethiobiotin via a radical-based mechanism. The chain is Biotin synthase from Helicobacter pylori (strain G27).